A 536-amino-acid polypeptide reads, in one-letter code: ATP synthase subunit alpha, mitochondrial (536 aa).

The N-terminal 24 residues, 1 to 24 (MFKNALRRAGVAAPRISRVAQRGY), are a transit peptide targeting the mitochondrion. 195-202 (GDRQTGKT) contributes to the ATP binding site.

F-type ATP synthases have 2 components, the catalytic core F(1) and the membrane-embedded component F(0), linked together by a central stalk and a peripheral stalk. The central stalk, also called rotor shaft, is often seen as part of F(1). The peripheral stalk is seen as part of F(0). F(0) contains the membrane channel next to the rotor. F-type ATP synthases form dimers but each monomer functions independently in ATP generation. The dimer consists of 17 different polypeptides: ATP1 (subunit alpha, 3 molecules per monomer, part of F(1)), ATP2 (subunit beta, 3 copies per monomer, part of F(1)), ATP3 (subunit gamma, part of the central stalk), ATP4 (subunit b, part of the peripheral stalk), ATP5/OSCP (subunit 5/OSCP, part of the peripheral stalk), ATP6 (subunit a, part of the peripheral stalk), ATP7 (subunit d, part of the peripheral stalk), ATP8 (subunit 8, part of the peripheral stalk), OLI1 (subunit c, part of the rotor, 10 molecules per monomer), ATP14 (subunit h, part of the peripheral stalk), ATP15 (subunit epsilon, part of the central stalk), ATP16 (subunit delta, part of the central stalk), ATP17 (subunit f, part of the peripheral stalk), ATP18 (subunit i/j, part of the peripheral stalk), ATP19 (subunit k, dimer-specific, at interface between monomers), ATP20 (subunit g, at interface between monomers), TIM11 (subunit e, at interface between monomers).

Its subcellular location is the mitochondrion inner membrane. Functionally, mitochondrial membrane ATP synthase (F(1)F(0) ATP synthase or Complex V) produces ATP from ADP in the presence of a proton gradient across the membrane which is generated by electron transport complexes of the respiratory chain. F-type ATP synthases consist of two structural domains, F(1) - containing the extramembraneous catalytic core, and F(0) - containing the membrane proton channel, linked together by a central stalk and a peripheral stalk. During catalysis, ATP synthesis in the catalytic domain of F(1) is coupled via a rotary mechanism of the central stalk subunits to proton translocation. Subunits alpha/ATP1 and beta/ATP2 form the catalytic core in F(1). Rotation of the central stalk against the surrounding alpha/ATP1(3)beta/ATP2(3) subunits leads to hydrolysis of ATP in three separate catalytic sites on the beta/ATP2 subunits. Subunit alpha/ATP1 does not bear the catalytic high-affinity ATP-binding sites. The sequence is that of ATP synthase subunit alpha, mitochondrial from Yarrowia lipolytica (strain CLIB 122 / E 150) (Yeast).